We begin with the raw amino-acid sequence, 257 residues long: tRNA dimethylallyltransferase (257 aa).

An ATP-binding site is contributed by 15–22 (GPTASGKS). 17–22 (TASGKS) serves as a coordination point for substrate.

This sequence belongs to the IPP transferase family. In terms of assembly, monomer. Requires Mg(2+) as cofactor.

It carries out the reaction adenosine(37) in tRNA + dimethylallyl diphosphate = N(6)-dimethylallyladenosine(37) in tRNA + diphosphate. Catalyzes the transfer of a dimethylallyl group onto the adenine at position 37 in tRNAs that read codons beginning with uridine, leading to the formation of N6-(dimethylallyl)adenosine (i(6)A). The chain is tRNA dimethylallyltransferase from Oenococcus oeni (strain ATCC BAA-331 / PSU-1).